The sequence spans 166 residues: Heavy metal-associated isoprenylated plant protein 45 (166 aa).

Residues 15–78 (LSIVELLVDM…MVKRTGRTAE (64 aa)) form the HMA domain. Residues cysteine 26 and cysteine 29 each contribute to the a metal cation site. Cysteine 163 carries the cysteine methyl ester modification. A lipid anchor (S-farnesyl cysteine) is attached at cysteine 163. Positions 164-166 (TIM) are cleaved as a propeptide — removed in mature form.

It belongs to the HIPP family.

Functionally, heavy-metal-binding protein. The sequence is that of Heavy metal-associated isoprenylated plant protein 45 from Arabidopsis thaliana (Mouse-ear cress).